Consider the following 333-residue polypeptide: Homeobox protein Hox-A1 (333 aa).

The interval 61–82 (ITSPHHHHHHHHHPQPATYQTS) is disordered. Residues 64–74 (PHHHHHHHHHP) are compositionally biased toward basic residues. An interaction with OGT region spans residues 74-202 (PQPATYQTSG…PASETSSPAQ (129 aa)). Threonine 152 is a glycosylation site (O-linked (GlcNAc) threonine). An Antp-type hexapeptide motif is present at residues 203–208 (TFDWMK). Residues 227–286 (QPNAVRTNFTTKQLTELEKEFHFNKYLTRARSEIAASLQLNETQVKIWFQNRRMKQKKRE) constitute a DNA-binding region (homeobox). The segment at 279–333 (RMKQKKREKEGLLPMSPATPPGSDEKTEESSEKSSSSPSAPSPASSTSDTLTTSH) is disordered. Over residues 301-310 (SDEKTEESSE) the composition is skewed to basic and acidic residues. A compositionally biased stretch (low complexity) spans 311–333 (KSSSSPSAPSPASSTSDTLTTSH).

This sequence belongs to the Antp homeobox family. Labial subfamily. In terms of assembly, interacts with OGT (via TPR repeats domain); the interaction takes place mainly in the nucleus. Forms a DNA-binding heterodimer with transcription factor PBX1. In terms of processing, glycosylated by OGT.

Its subcellular location is the nucleus. In terms of biological role, sequence-specific transcription factor. Regulates multiple developmental processes including brainstem, inner and outer ear, abducens nerve and cardiovascular development and morphogenesis as well as cognition and behavior. Also part of a developmental regulatory system that provides cells with specific positional identities on the anterior-posterior axis. Acts on the anterior body structures. Seems to act in the maintenance and/or generation of hindbrain segments. Activates transcription in the presence of PBX1A and PKNOX1. This chain is Homeobox protein Hox-A1 (Hoxa1), found in Rattus norvegicus (Rat).